A 153-amino-acid chain; its full sequence is Ribosomal RNA large subunit methyltransferase H (153 aa).

S-adenosyl-L-methionine-binding positions include L70, G102, and 121 to 126 (LSRMTF).

Belongs to the RNA methyltransferase RlmH family. Homodimer.

The protein localises to the cytoplasm. It carries out the reaction pseudouridine(1915) in 23S rRNA + S-adenosyl-L-methionine = N(3)-methylpseudouridine(1915) in 23S rRNA + S-adenosyl-L-homocysteine + H(+). In terms of biological role, specifically methylates the pseudouridine at position 1915 (m3Psi1915) in 23S rRNA. This is Ribosomal RNA large subunit methyltransferase H from Geobacter sulfurreducens (strain ATCC 51573 / DSM 12127 / PCA).